We begin with the raw amino-acid sequence, 347 residues long: Phosphoribosylformylglycinamidine cyclo-ligase (347 aa).

The protein belongs to the AIR synthase family.

It localises to the cytoplasm. It carries out the reaction 2-formamido-N(1)-(5-O-phospho-beta-D-ribosyl)acetamidine + ATP = 5-amino-1-(5-phospho-beta-D-ribosyl)imidazole + ADP + phosphate + H(+). It participates in purine metabolism; IMP biosynthesis via de novo pathway; 5-amino-1-(5-phospho-D-ribosyl)imidazole from N(2)-formyl-N(1)-(5-phospho-D-ribosyl)glycinamide: step 2/2. This chain is Phosphoribosylformylglycinamidine cyclo-ligase, found in Prochlorococcus marinus (strain AS9601).